A 131-amino-acid polypeptide reads, in one-letter code: MSAPDSNSGHAHDSAQNEGAAEGTRDPFGIDRLSVDYDYLLYRIQDHVTSIQLSTTEICRQQNQLVEQGIIGDAIDINIEEMRRILQKCEELETHFDMLDQIDSIVQTFRPRLDDIVREHRELTRNTERRI.

Positions 1–29 (MSAPDSNSGHAHDSAQNEGAAEGTRDPFG) are disordered. Residues 73 to 101 (DAIDINIEEMRRILQKCEELETHFDMLDQ) are a coiled coil.

It belongs to the BLOC1S4 family. In terms of assembly, component of the biogenesis of lysosome-related organelles complex-1 (BLOC-1).

Its subcellular location is the cytoplasm. Functionally, component of the biogenesis of lysosome-related organelles complex-1 (BLOC-1), a complex that is involved in endosomal cargo sorting. The protein is Biogenesis of lysosome-related organelles complex 1 subunit CNL1 (CLN1) of Lachancea thermotolerans (strain ATCC 56472 / CBS 6340 / NRRL Y-8284) (Yeast).